Here is a 357-residue protein sequence, read N- to C-terminus: Dehydrogenase FUB6 (357 aa).

Residues 1–17 (MGGEVSNKTWVFKQSPS) are compositionally biased toward polar residues. Residues 1-22 (MGGEVSNKTWVFKQSPSGLPEP) are disordered.

The protein belongs to the zinc-containing alcohol dehydrogenase family. Quinone oxidoreductase subfamily.

The protein operates within mycotoxin biosynthesis. In terms of biological role, dehydrogenase; part of the gene cluster that mediates the biosynthesis of fusaric acid, a mycotoxin with low to moderate toxicity to animals and humans, but with high phytotoxic properties. L-aspartate is suggested as fusaric acid amino acid precursor that is activated and further processed to O-acetyl-L-homoserine by cluster enzymes aspartate kinase FUB3 and homoserine O-acetyltransferase FUB5, as well as enzymes of the primary metabolism. The polyketide synthase (PKS) FUB1 generates the triketide trans-2-hexenal which is presumptively released by the hydrolase FUB4 and linked to the NRPS-bound amino acid precursor by NAD(P)-dependent dehydrogenase FUB6. FUB1, FUB4, and the non-canonical NRPS Fub8 may form an enzyme complex. Further processing of the NRPS-bound intermediate might be carried out by FUB6 and the O-acetylhomoserine FUB7, enabling a spontaneous electrocyclization to close the carbon backbone of fusaric acid. Dihydrofusaric acid is likely to be released via reduction by the thioester reductase (TR) domain of FUB8 whereupon the final oxidation to fusaric acid may (also) be performed by the FMN-dependent dehydrogenase FUB9. This is Dehydrogenase FUB6 from Fusarium oxysporum f. sp. lycopersici (strain 4287 / CBS 123668 / FGSC 9935 / NRRL 34936) (Fusarium vascular wilt of tomato).